The chain runs to 339 residues: Ornithine carbamoyltransferase (339 aa).

Residues 56–59 (STRT), Arg-107, and 134–137 (HPTQ) each bind carbamoyl phosphate. Residues Asn-168, Asp-232, and 236–237 (SM) each bind L-ornithine. Carbamoyl phosphate-binding positions include 274–275 (CL) and Arg-320.

The protein belongs to the aspartate/ornithine carbamoyltransferase superfamily. OTCase family.

It localises to the cytoplasm. It carries out the reaction carbamoyl phosphate + L-ornithine = L-citrulline + phosphate + H(+). The protein operates within amino-acid biosynthesis; L-arginine biosynthesis; L-arginine from L-ornithine and carbamoyl phosphate: step 1/3. In terms of biological role, reversibly catalyzes the transfer of the carbamoyl group from carbamoyl phosphate (CP) to the N(epsilon) atom of ornithine (ORN) to produce L-citrulline. This is Ornithine carbamoyltransferase from Buchnera aphidicola subsp. Baizongia pistaciae (strain Bp).